We begin with the raw amino-acid sequence, 136 residues long: Immunoglobulin J chain (136 aa).

3 disulfide bridges follow: C12-C100, C71-C91, and C108-C133. N48 carries N-linked (GlcNAc...) (complex) asparagine glycosylation.

As to quaternary structure, part of the secretory IgA (sIgA) complex that consists of two, four or five IgA monomers, and two additional non-Ig polypeptides, namely the JCHAIN and the secretory component (the proteolytic product of PIGR). Part of the secretory IgM (sIgM) complex that consist of five IgM monomers, and two additional non-Ig polypeptides, namely the JCHAIN and the secretory component (the proteolytic product of PIGR). JCHAIN-containing IgM interacts (via CH4 domain) with FCRM (via Ig-like domain).

Its subcellular location is the secreted. Its function is as follows. Serves to link two monomer units of either IgM or IgA. In the case of IgM, the J chain-joined dimer is a nucleating unit for the IgM pentamer, and in the case of IgA it induces dimers and/or larger polymers. It also helps to bind these immunoglobulins to secretory component. The protein is Immunoglobulin J chain of Oryctolagus cuniculus (Rabbit).